The following is a 25-amino-acid chain: Antimicrobial peptide 3 (25 aa).

Skin.

The protein resides in the secreted. Its function is as follows. Has antibacterial activity against Gram-positive bacterium S.aureus and Gram-negative bacterium E.coli, when in combination with XT1 and XT6. The polypeptide is Antimicrobial peptide 3 (Xenopus tropicalis (Western clawed frog)).